Consider the following 184-residue polypeptide: Endothelial cell-specific molecule 1 (184 aa).

An N-terminal signal peptide occupies residues 1–21 (MKSLLLLTTLLVPLHLGMAWS). The IGFBP N-terminal domain occupies 24–102 (YAVDCPEHCD…GDEFGICKDC (79 aa)). 6 disulfides stabilise this stretch: Cys-28–Cys-51, Cys-32–Cys-53, Cys-37–Cys-54, Cys-43–Cys-57, Cys-65–Cys-83, and Cys-77–Cys-99. Residues 145 to 184 (RTSASHTERDSASGDGNAVREEIGEGNAARPSVMKWLNPR) are disordered. Basic and acidic residues predominate over residues 150–167 (HTERDSASGDGNAVREEI). Residue Ser-157 is glycosylated (O-linked (Xyl...) (chondroitin sulfate) serine).

In terms of processing, O-glycosylated; contains chondroitin sulfate and dermatan sulfate.

It is found in the secreted. Its function is as follows. Involved in angiogenesis; promotes angiogenic sprouting. May have potent implications in lung endothelial cell-leukocyte interactions. This Mus musculus (Mouse) protein is Endothelial cell-specific molecule 1 (Esm1).